Consider the following 301-residue polypeptide: Protoheme IX farnesyltransferase (301 aa).

Transmembrane regions (helical) follow at residues 30–50 (VISLLDLAAIAGFVLGLPKAI), 55–75 (IIVSFLAVIIGGSLASGGGMI), 106–126 (AYAIGSIFIVVGTLIGFLANP), 127–147 (LTALFIALGAFIYVVIYSIWL), 152–172 (WWNIVIGGFAGSAAAWAGFAA), 177–197 (FTLLSFLLGFLIFMWTPGHFW), 233–253 (ALMVPFALLIGLYAGLIYLIV), and 281–301 (FKLSSPYLAIILLTLIIVKLI).

Belongs to the UbiA prenyltransferase family. Protoheme IX farnesyltransferase subfamily.

Its subcellular location is the cell membrane. The enzyme catalyses heme b + (2E,6E)-farnesyl diphosphate + H2O = Fe(II)-heme o + diphosphate. Its pathway is porphyrin-containing compound metabolism; heme O biosynthesis; heme O from protoheme: step 1/1. Converts heme B (protoheme IX) to heme O by substitution of the vinyl group on carbon 2 of heme B porphyrin ring with a hydroxyethyl farnesyl side group. This Sulfurisphaera tokodaii (strain DSM 16993 / JCM 10545 / NBRC 100140 / 7) (Sulfolobus tokodaii) protein is Protoheme IX farnesyltransferase.